Reading from the N-terminus, the 151-residue chain is 6,7-dimethyl-8-ribityllumazine synthase (151 aa).

5-amino-6-(D-ribitylamino)uracil is bound by residues Phe15, 47 to 49, and 71 to 73; these read TFE and AVI. 76-77 is a (2S)-2-hydroxy-3-oxobutyl phosphate binding site; it reads ET. His79 functions as the Proton donor in the catalytic mechanism. Leu104 serves as a coordination point for 5-amino-6-(D-ribitylamino)uracil. Position 119 (Arg119) interacts with (2S)-2-hydroxy-3-oxobutyl phosphate.

This sequence belongs to the DMRL synthase family.

The enzyme catalyses (2S)-2-hydroxy-3-oxobutyl phosphate + 5-amino-6-(D-ribitylamino)uracil = 6,7-dimethyl-8-(1-D-ribityl)lumazine + phosphate + 2 H2O + H(+). The protein operates within cofactor biosynthesis; riboflavin biosynthesis; riboflavin from 2-hydroxy-3-oxobutyl phosphate and 5-amino-6-(D-ribitylamino)uracil: step 1/2. Catalyzes the formation of 6,7-dimethyl-8-ribityllumazine by condensation of 5-amino-6-(D-ribitylamino)uracil with 3,4-dihydroxy-2-butanone 4-phosphate. This is the penultimate step in the biosynthesis of riboflavin. This Metallosphaera sedula (strain ATCC 51363 / DSM 5348 / JCM 9185 / NBRC 15509 / TH2) protein is 6,7-dimethyl-8-ribityllumazine synthase.